Reading from the N-terminus, the 295-residue chain is Acetylglutamate kinase (295 aa).

Residues 66–67 (GG), arginine 88, and asparagine 193 contribute to the substrate site.

The protein belongs to the acetylglutamate kinase family. ArgB subfamily.

It is found in the cytoplasm. The catalysed reaction is N-acetyl-L-glutamate + ATP = N-acetyl-L-glutamyl 5-phosphate + ADP. It participates in amino-acid biosynthesis; L-arginine biosynthesis; N(2)-acetyl-L-ornithine from L-glutamate: step 2/4. Its function is as follows. Catalyzes the ATP-dependent phosphorylation of N-acetyl-L-glutamate. In Rhizobium johnstonii (strain DSM 114642 / LMG 32736 / 3841) (Rhizobium leguminosarum bv. viciae), this protein is Acetylglutamate kinase.